The sequence spans 543 residues: CTP synthase (543 aa).

An amidoligase domain region spans residues 1-265 (MTRYVFITGG…DREVLRHFGL (265 aa)). Residue Ser13 coordinates CTP. Ser13 lines the UTP pocket. 14-19 (SLGKGI) provides a ligand contact to ATP. Tyr54 is an L-glutamine binding site. Asp71 is a binding site for ATP. Mg(2+) contacts are provided by Asp71 and Glu139. Residues 146–148 (DIE), 186–191 (KTKPTQ), and Lys222 contribute to the CTP site. UTP is bound by residues 186–191 (KTKPTQ) and Lys222. Residue Val240 participates in ATP binding. A Glutamine amidotransferase type-1 domain is found at 291–542 (TIAVVGKYTN…IEAAVKQMRL (252 aa)). Position 353 (Gly353) interacts with L-glutamine. Catalysis depends on Cys380, which acts as the Nucleophile; for glutamine hydrolysis. L-glutamine is bound by residues 381 to 384 (FGMQ), Glu404, and Arg470. Residues His515 and Glu517 contribute to the active site.

This sequence belongs to the CTP synthase family. In terms of assembly, homotetramer.

It carries out the reaction UTP + L-glutamine + ATP + H2O = CTP + L-glutamate + ADP + phosphate + 2 H(+). The catalysed reaction is L-glutamine + H2O = L-glutamate + NH4(+). It catalyses the reaction UTP + NH4(+) + ATP = CTP + ADP + phosphate + 2 H(+). The protein operates within pyrimidine metabolism; CTP biosynthesis via de novo pathway; CTP from UDP: step 2/2. Its activity is regulated as follows. Allosterically activated by GTP, when glutamine is the substrate; GTP has no effect on the reaction when ammonia is the substrate. The allosteric effector GTP functions by stabilizing the protein conformation that binds the tetrahedral intermediate(s) formed during glutamine hydrolysis. Inhibited by the product CTP, via allosteric rather than competitive inhibition. Functionally, catalyzes the ATP-dependent amination of UTP to CTP with either L-glutamine or ammonia as the source of nitrogen. Regulates intracellular CTP levels through interactions with the four ribonucleotide triphosphates. The chain is CTP synthase from Acidiphilium cryptum (strain JF-5).